Reading from the N-terminus, the 1095-residue chain is Putative disease resistance protein At4g11170 (1095 aa).

Residues 9 to 173 enclose the TIR domain; it reads WRYDVFPSFR…TISKDVLEKL (165 aa). Glutamate 84 is a catalytic residue. An NB-ARC domain is found at 168–454; sequence DVLEKLNATP…HENYLKQMII (287 aa). 6 LRR repeats span residues 609 to 631, 632 to 654, 655 to 677, 679 to 701, 702 to 722, and 723 to 744; these read CLVELNMSHSKLKKLWSGVQPLR, NLRTMNLNSSRNLEILPNLMEAT, KLNRLDLGWCESLVELPSSIKNL, HLILLEMSCCKKLEIIPTNINLP, SLEVLHFRYCTRLQTFPEIST, and NIRLLNLIGTAITEVPPSVKYW.

It carries out the reaction NAD(+) + H2O = ADP-D-ribose + nicotinamide + H(+). The chain is Putative disease resistance protein At4g11170 from Arabidopsis thaliana (Mouse-ear cress).